A 310-amino-acid chain; its full sequence is Cytochrome f (310 aa).

A signal peptide spans 1 to 23; the sequence is MRRLIPILLGSLVLSLSILVAPA. Heme contacts are provided by tyrosine 28, cysteine 48, cysteine 51, and histidine 52. The chain crosses the membrane as a helical span at residues 277–297; that stretch reads IYGLLAFFVAVSLAQILLVLK.

The protein belongs to the cytochrome f family. As to quaternary structure, the 4 large subunits of the cytochrome b6-f complex are cytochrome b6, subunit IV (17 kDa polypeptide, PetD), cytochrome f and the Rieske protein, while the 4 small subunits are PetG, PetL, PetM and PetN. The complex functions as a dimer. It depends on heme as a cofactor.

The protein resides in the cellular thylakoid membrane. Component of the cytochrome b6-f complex, which mediates electron transfer between photosystem II (PSII) and photosystem I (PSI), cyclic electron flow around PSI, and state transitions. This Prochlorococcus marinus (strain MIT 9303) protein is Cytochrome f.